The sequence spans 466 residues: Asparagine--tRNA ligase (466 aa).

Belongs to the class-II aminoacyl-tRNA synthetase family. As to quaternary structure, homodimer.

It is found in the cytoplasm. It catalyses the reaction tRNA(Asn) + L-asparagine + ATP = L-asparaginyl-tRNA(Asn) + AMP + diphosphate + H(+). The protein is Asparagine--tRNA ligase of Shewanella oneidensis (strain ATCC 700550 / JCM 31522 / CIP 106686 / LMG 19005 / NCIMB 14063 / MR-1).